Reading from the N-terminus, the 313-residue chain is Competence protein ComGA (313 aa).

138 to 145 is a binding site for ATP; that stretch reads GPVGSGKT.

The protein belongs to the GSP E family.

Its subcellular location is the cell membrane. In terms of biological role, required for uptake of DNA by competent cells. May be involved in assembly of a complex forming a transformation pilus at the surface of competent cells. The sequence is that of Competence protein ComGA from Streptococcus pneumoniae (strain ATCC BAA-255 / R6).